A 253-amino-acid chain; its full sequence is tRNA uridine(34) hydroxylase (253 aa).

The region spanning 127-221 (RGRPLVLLDT…YFEEVGGEGY (95 aa)) is the Rhodanese domain. Cys181 functions as the Cysteine persulfide intermediate in the catalytic mechanism.

The protein belongs to the TrhO family.

It catalyses the reaction uridine(34) in tRNA + AH2 + O2 = 5-hydroxyuridine(34) in tRNA + A + H2O. Catalyzes oxygen-dependent 5-hydroxyuridine (ho5U) modification at position 34 in tRNAs. In Xanthomonas oryzae pv. oryzae (strain MAFF 311018), this protein is tRNA uridine(34) hydroxylase.